Reading from the N-terminus, the 170-residue chain is Crossover junction endodeoxyribonuclease RuvC (170 aa).

Residues aspartate 11, glutamate 71, and aspartate 143 contribute to the active site. Residues aspartate 11, glutamate 71, and aspartate 143 each contribute to the Mg(2+) site.

It belongs to the RuvC family. Homodimer which binds Holliday junction (HJ) DNA. The HJ becomes 2-fold symmetrical on binding to RuvC with unstacked arms; it has a different conformation from HJ DNA in complex with RuvA. In the full resolvosome a probable DNA-RuvA(4)-RuvB(12)-RuvC(2) complex forms which resolves the HJ. The cofactor is Mg(2+).

The protein resides in the cytoplasm. The catalysed reaction is Endonucleolytic cleavage at a junction such as a reciprocal single-stranded crossover between two homologous DNA duplexes (Holliday junction).. Functionally, the RuvA-RuvB-RuvC complex processes Holliday junction (HJ) DNA during genetic recombination and DNA repair. Endonuclease that resolves HJ intermediates. Cleaves cruciform DNA by making single-stranded nicks across the HJ at symmetrical positions within the homologous arms, yielding a 5'-phosphate and a 3'-hydroxyl group; requires a central core of homology in the junction. The consensus cleavage sequence is 5'-(A/T)TT(C/G)-3'. Cleavage occurs on the 3'-side of the TT dinucleotide at the point of strand exchange. HJ branch migration catalyzed by RuvA-RuvB allows RuvC to scan DNA until it finds its consensus sequence, where it cleaves and resolves the cruciform DNA. The chain is Crossover junction endodeoxyribonuclease RuvC from Rhizobium rhizogenes (strain K84 / ATCC BAA-868) (Agrobacterium radiobacter).